The chain runs to 121 residues: Holin-like protein CidA (121 aa).

A run of 4 helical transmembrane segments spans residues 3–23 (WWKL…GEWI), 30–50 (PVPG…FNLV), 58–78 (GADF…VAVI), and 89–109 (IDLI…TGLL).

It belongs to the CidA/LrgA family. CidA subfamily.

It localises to the cell membrane. Its function is as follows. Increases the activity of extracellular murein hydrolases possibly by mediating their export via hole formation. Inhibited by the antiholin-like proteins LrgAB. In an unstressed cell, the LrgAB products probably inhibit the function of the CidA protein. When a cell is stressed by the addition of antibiotics or by other factors in the environment, CidA possibly oligomerizes within the bacterial cell membrane, creating lesions that disrupt the proton motive force, which in turn results in loss of cell viability. These lesions are also hypothesized to regulate the subsequent cell lysis by either allowing the murein hydrolases access to the cell wall substrate and/or regulating their activity by a possible change in the cell wall pH that results from loss of membrane potential. This chain is Holin-like protein CidA, found in Bacillus cereus (strain ATCC 10987 / NRS 248).